A 310-amino-acid polypeptide reads, in one-letter code: Aspartate carbamoyltransferase catalytic subunit 3 (310 aa).

Positions 55 and 56 each coordinate carbamoyl phosphate. Lys85 serves as a coordination point for L-aspartate. The carbamoyl phosphate site is built by Arg106, His134, and Gln137. Residues Arg167 and Arg228 each coordinate L-aspartate. Residues Leu266 and Pro267 each coordinate carbamoyl phosphate.

It belongs to the aspartate/ornithine carbamoyltransferase superfamily. ATCase family. In terms of assembly, heterododecamer (2C3:3R2) of six catalytic PyrB chains organized as two trimers (C3), and six regulatory PyrI chains organized as three dimers (R2).

The enzyme catalyses carbamoyl phosphate + L-aspartate = N-carbamoyl-L-aspartate + phosphate + H(+). The protein operates within pyrimidine metabolism; UMP biosynthesis via de novo pathway; (S)-dihydroorotate from bicarbonate: step 2/3. Functionally, catalyzes the condensation of carbamoyl phosphate and aspartate to form carbamoyl aspartate and inorganic phosphate, the committed step in the de novo pyrimidine nucleotide biosynthesis pathway. This chain is Aspartate carbamoyltransferase catalytic subunit 3, found in Shewanella halifaxensis (strain HAW-EB4).